Here is a 318-residue protein sequence, read N- to C-terminus: Pyrimidine-specific ribonucleoside hydrolase RihA (318 aa).

Histidine 240 is an active-site residue.

Belongs to the IUNH family. RihA subfamily.

Functionally, hydrolyzes cytidine or uridine to ribose and cytosine or uracil, respectively. The sequence is that of Pyrimidine-specific ribonucleoside hydrolase RihA from Shewanella sp. (strain MR-7).